Reading from the N-terminus, the 650-residue chain is Probable basic-leucine zipper transcription factor K (650 aa).

A coiled-coil region spans residues 37-180; it reads IDNNNNNYSN…KQQKQQQQEQ (144 aa). 2 disordered regions span residues 109–130 and 242–279; these read IPQQQQQEQDQQEDQDQEQEQE and TTLNTNLQSDNNNNNNNNNNNNNNNNNNNNNNNNNNNL. Positions 118–129 are enriched in acidic residues; sequence DQQEDQDQEQEQ. Polar residues predominate over residues 242–251; that stretch reads TTLNTNLQSD. The segment covering 252-278 has biased composition (low complexity); the sequence is NNNNNNNNNNNNNNNNNNNNNNNNNNN. Residues 259 to 286 are a coiled coil; sequence NNNNNNNNNNNNNNNNNNNNLLNEKQIE. The 64-residue stretch at 305-368 folds into the bZIP domain; sequence FNKIEKGKRN…IEIMRSEPES (64 aa). The segment at 307-327 is basic motif; it reads KIEKGKRNQTESSKNFRERKK. Positions 330-337 are leucine-zipper; the sequence is IKDIELKL. Positions 452-466 are enriched in low complexity; it reads NNNNNNNNNNNNNNN. The segment at 452–473 is disordered; the sequence is NNNNNNNNNNNNNNNDNDDDNE.

The protein belongs to the bZIP family.

The protein localises to the nucleus. In terms of biological role, probable transcriptional regulator. The chain is Probable basic-leucine zipper transcription factor K (bzpK) from Dictyostelium discoideum (Social amoeba).